A 481-amino-acid chain; its full sequence is UDP-glycosyltransferase 71K2 (481 aa).

UDP-alpha-D-glucose is bound by residues serine 285, 350 to 351, 368 to 376, and 390 to 393; these read WA, HCGWNSILE, and YAEQ.

The protein belongs to the UDP-glycosyltransferase family.

Functionally, glycosyltransferase that possesses chalcone and flavonol 2'-O-glycosyltransferase activity. Converts phloretin to phlorizin (phloretin 2'-O-glucoside), a potent antioxidant. Possesses glycosyltransferase activity toward quercetin, isoliquiritigenin, butein and caffeic acid. The protein is UDP-glycosyltransferase 71K2 of Pyrus communis (Pear).